Here is a 479-residue protein sequence, read N- to C-terminus: Cysteine--tRNA ligase (479 aa).

Residue Cys-29 participates in Zn(2+) binding. The 'HIGH' region motif lies at 31 to 41 (ATVQGAPHIGH). Positions 171–197 (QRVEDMQDAPDADPRGKRDPRDFALWK) are disordered. Residues 182-197 (ADPRGKRDPRDFALWK) are compositionally biased toward basic and acidic residues. Positions 224, 249, and 253 each coordinate Zn(2+). A 'KMSKS' region motif is present at residues 280–284 (KMSKS). Lys-283 provides a ligand contact to ATP.

It belongs to the class-I aminoacyl-tRNA synthetase family. As to quaternary structure, monomer. Requires Zn(2+) as cofactor.

Its subcellular location is the cytoplasm. The enzyme catalyses tRNA(Cys) + L-cysteine + ATP = L-cysteinyl-tRNA(Cys) + AMP + diphosphate. This chain is Cysteine--tRNA ligase, found in Kocuria rhizophila (strain ATCC 9341 / DSM 348 / NBRC 103217 / DC2201).